The following is a 336-amino-acid chain: C2H2 finger domain transcription factor mtfA (336 aa).

Positions 1-245 (MDVASLISPS…PSPGHQQMIS (245 aa)) are disordered. 2 stretches are compositionally biased toward polar residues: residues 7–29 (ISPS…SSAS) and 36–56 (EQST…YSRT). Low complexity predominate over residues 136–149 (SPSTSSVSAASSSA). A compositionally biased stretch (polar residues) spans 168 to 181 (TDRSSISSQGSVQH). The segment covering 182–210 (AASAPYASPAPSVSSFSSPIEPSTPSTAA) has biased composition (low complexity). Residues 216 to 245 (PAPNTFQNPSPFPQTSTASLPSPGHQQMIS) are compositionally biased toward polar residues. 2 C2H2-type zinc fingers span residues 272–294 (YICR…SHSH) and 300–325 (FRCT…RGCH).

The protein localises to the nucleus. Functionally, transcription factor that controls morphogenesis and virulence. Acts as a positive regulator of gliotixin and protease production. This Aspergillus fumigatus (strain CBS 144.89 / FGSC A1163 / CEA10) (Neosartorya fumigata) protein is C2H2 finger domain transcription factor mtfA.